Here is a 345-residue protein sequence, read N- to C-terminus: Protein Tob1 (345 aa).

The Bipartite nuclear localization signal motif lies at 22–39 (RRRVNIFGEELERLLKKK). The segment at 82–92 (VRGNLPQDLSV) is important for nuclear localization. The segment covering 144 to 160 (DPASSVSSSPSPPFGHS) has biased composition (low complexity). Residues 144-171 (DPASSVSSSPSPPFGHSAAVSPTFMPRS) are disordered. Positions 161 to 218 (AAVSPTFMPRSTQPLTFTTATFAATKFGSTKMKNSGRSNKVARTSPINLGLNVNDLLK) are required for interaction with CPEB3. Thr204 carries the post-translational modification Phosphothreonine. A Nuclear export signal motif is present at residues 226–234 (MHSLYGLGL). The interval 231-267 (GLGLGSQQQPQQQQQPAQPPPPPPPPQQQQQQKTSAL) is disordered. Low complexity predominate over residues 237 to 246 (QQQPQQQQQP). Positions 247-257 (AQPPPPPPPPQ) are enriched in pro residues.

Belongs to the BTG family. As to quaternary structure, interacts with ERBB2. Interacts with CNOT7. Interacts with CPEB3 (via C-terminal RNA-binding region); recruits CNOT7 to CPEB3 to form a ternary complex required for mRNA deadenylation and decay. Interacts with CNOT8. Interacts with CPEB4. Post-translationally, phosphorylated on Ser and Thr residues. In terms of tissue distribution, ubiquitous.

The protein localises to the cytoplasm. It localises to the nucleus. Functionally, anti-proliferative protein; the function is mediated by association with deadenylase subunits of the CCR4-NOT complex. Mediates CPEB3-accelerated mRNA deadenylation by binding to CPEB3 and recruiting CNOT7 which leads to target mRNA deadenylation and decay. This chain is Protein Tob1 (TOB1), found in Homo sapiens (Human).